We begin with the raw amino-acid sequence, 600 residues long: Integrator complex subunit 11 (600 aa).

Zn(2+)-binding residues include His68, His70, Asp72, His73, His157, and Asp178. Positions 68-73 (HFHLDH) match the HXHXDH motif motif. Glu203 is a catalytic residue. Residue Lys381 forms a Glycyl lysine isopeptide (Lys-Gly) (interchain with G-Cter in SUMO) linkage. His414 provides a ligand contact to Zn(2+). Residues Lys462 and Lys475 each participate in a glycyl lysine isopeptide (Lys-Gly) (interchain with G-Cter in SUMO) cross-link. Residues 469–479 (LLPEAKKPRLL) carry the Nuclear localization signal motif.

Belongs to the metallo-beta-lactamase superfamily. RNA-metabolizing metallo-beta-lactamase-like family. INTS11 subfamily. In terms of assembly, component of the Integrator complex, composed of core subunits INTS1, INTS2, INTS3, INTS4, INTS5, INTS6, INTS7, INTS8, INTS9/RC74, INTS10, INTS11/CPSF3L, INTS12, INTS13, INTS14 and INTS15. The core complex associates with protein phosphatase 2A subunits PPP2CA and PPP2R1A, to form the Integrator-PP2A (INTAC) complex. INTS11 is part of the RNA endonuclease subcomplex, composed of INTS4, INTS9, INTS11 and inositol hexakisphosphate (InsP6). Interacts with WDR73; interaction is required for the assembly of the RNA endonuclease subcomplex in the cytoplasm. Interacts with BRAT1; interaction is required for the assembly of the RNA endonuclease subcomplex and inhibits the endonuclease activity of INTS11 before formation of mature integrator complex. Zn(2+) serves as cofactor. In terms of processing, sumoylated; sumoylation regulates its subcellular location and is required for integrator complex integrity.

The protein localises to the nucleus. It localises to the cytoplasm. With respect to regulation, the RNA endonuclease activity is inhibited by BRAT1 that forms hyrogen bond and hydrophobic interactions with the active site. Functionally, RNA endonuclease component of the integrator complex, a multiprotein complex that terminates RNA polymerase II (Pol II) transcription in the promoter-proximal region of genes. The integrator complex provides a quality checkpoint during transcription elongation by driving premature transcription termination of transcripts that are unfavorably configured for transcriptional elongation: the complex terminates transcription by (1) catalyzing dephosphorylation of the C-terminal domain (CTD) of Pol II subunit POLR2A/RPB1 and SUPT5H/SPT5, (2) degrading the exiting nascent RNA transcript via endonuclease activity and (3) promoting the release of Pol II from bound DNA. The integrator complex is also involved in terminating the synthesis of non-coding Pol II transcripts, such as enhancer RNAs (eRNAs), small nuclear RNAs (snRNAs), telomerase RNAs and long non-coding RNAs (lncRNAs). Within the integrator complex, INTS11 constitutes the RNA endonuclease subunit that degrades exiting nascent RNA transcripts. Mediates recruitment of cytoplasmic dynein to the nuclear envelope, probably as component of the integrator complex. The protein is Integrator complex subunit 11 of Mus musculus (Mouse).